Consider the following 1362-residue polypeptide: DNA-directed RNA polymerase subunit beta'' (1362 aa).

Zn(2+) is bound by residues cysteine 224, cysteine 295, cysteine 302, and cysteine 305.

Belongs to the RNA polymerase beta' chain family. RpoC2 subfamily. In plastids the minimal PEP RNA polymerase catalytic core is composed of four subunits: alpha, beta, beta', and beta''. When a (nuclear-encoded) sigma factor is associated with the core the holoenzyme is formed, which can initiate transcription. It depends on Zn(2+) as a cofactor.

It is found in the plastid. The protein localises to the chloroplast. It carries out the reaction RNA(n) + a ribonucleoside 5'-triphosphate = RNA(n+1) + diphosphate. Functionally, DNA-dependent RNA polymerase catalyzes the transcription of DNA into RNA using the four ribonucleoside triphosphates as substrates. The polypeptide is DNA-directed RNA polymerase subunit beta'' (Helianthus annuus (Common sunflower)).